The primary structure comprises 101 residues: A-type ATP synthase subunit K (101 aa).

The next 3 helical transmembrane spans lie at 5 to 25 (WLPF…AQAP), 37 to 57 (IGAG…VGMA), and 75 to 95 (ILIF…FAVL).

It belongs to the V-ATPase proteolipid subunit family. Has multiple subunits with at least A(3), B(3), C, D, E, F, H, I and proteolipid K(x). The N-terminus is blocked.

It is found in the cell membrane. Its function is as follows. Component of the A-type ATP synthase that produces ATP from ADP in the presence of a proton gradient across the membrane. The sequence is that of A-type ATP synthase subunit K from Sulfurisphaera tokodaii (strain DSM 16993 / JCM 10545 / NBRC 100140 / 7) (Sulfolobus tokodaii).